The primary structure comprises 95 residues: Small ribosomal subunit protein uS19 (95 aa).

It belongs to the universal ribosomal protein uS19 family.

Functionally, protein S19 forms a complex with S13 that binds strongly to the 16S ribosomal RNA. In Thermotoga sp. (strain RQ2), this protein is Small ribosomal subunit protein uS19.